We begin with the raw amino-acid sequence, 100 residues long: MEPVNPSLEPWKHPGSQPKTACTNCYCKKCCFHCQACFITKGLGISYGRKKRRQRRRPPQDSQTHQVSLSKPSSQPRGDPTGPKEQKKKVERETETDPVH.

The interval 1–20 is disordered; sequence MEPVNPSLEPWKHPGSQPKT. Residues 1 to 24 form an interaction with human CREBBP region; sequence MEPVNPSLEPWKHPGSQPKTACTN. Residues 1–48 are transactivation; the sequence is MEPVNPSLEPWKHPGSQPKTACTNCYCKKCCFHCQACFITKGLGISYG. Residues Cys22, Cys25, and Cys27 each contribute to the Zn(2+) site. The tract at residues 22–37 is cysteine-rich; sequence CTNCYCKKCCFHCQAC. The residue at position 28 (Lys28) is an N6-acetyllysine; by host PCAF. 4 residues coordinate Zn(2+): Cys30, His33, Cys34, and Cys37. The tract at residues 38–48 is core; that stretch reads FITKGLGISYG. The tract at residues 47 to 100 is disordered; sequence YGRKKRRQRRRPPQDSQTHQVSLSKPSSQPRGDPTGPKEQKKKVERETETDPVH. Basic residues predominate over residues 48-57; sequence GRKKRRQRRR. A Nuclear localization signal, RNA-binding (TAR), and protein transduction motif is present at residues 49–57; sequence RKKRRQRRR. An interaction with the host capping enzyme RNGTT region spans residues 49-85; it reads RKKRRQRRRPPQDSQTHQVSLSKPSSQPRGDPTGPKE. Lys50 and Lys51 each carry N6-acetyllysine; by host EP300 and GCN5L2. Arg52 and Arg53 each carry asymmetric dimethylarginine; by host PRMT6. Polar residues predominate over residues 61–76; it reads DSQTHQVSLSKPSSQP. Lys71 participates in a covalent cross-link: Glycyl lysine isopeptide (Lys-Gly) (interchain with G-Cter in ubiquitin). Residues 77-79 carry the Cell attachment site motif; it reads RGD. Positions 82-100 are enriched in basic and acidic residues; that stretch reads GPKEQKKKVERETETDPVH.

Belongs to the lentiviruses Tat family. As to quaternary structure, interacts with host CCNT1. Associates with the P-TEFb complex composed at least of Tat, P-TEFb (CDK9 and CCNT1), TAR RNA, RNA Pol II. Recruits the HATs CREBBP, TAF1/TFIID, EP300, PCAF and GCN5L2. Interacts with host KAT5/Tip60; this interaction targets the latter to degradation. Interacts with the host deacetylase SIRT1. Interacts with host capping enzyme RNGTT; this interaction stimulates RNGTT. Binds to host KDR, and to the host integrins ITGAV/ITGB3 and ITGA5/ITGB1. Interacts with host KPNB1/importin beta-1 without previous binding to KPNA1/importin alpha-1. Interacts with EIF2AK2. Interacts with host nucleosome assembly protein NAP1L1; this interaction may be required for the transport of Tat within the nucleus, since the two proteins interact at the nuclear rim. Interacts with host C1QBP/SF2P32; this interaction involves lysine-acetylated Tat. Interacts with the host chemokine receptors CCR2, CCR3 and CXCR4. Interacts with host DPP4/CD26; this interaction may trigger an anti-proliferative effect. Interacts with host LDLR. Interacts with the host extracellular matrix metalloproteinase MMP1. Interacts with host PRMT6; this interaction mediates Tat's methylation. Interacts with, and is ubiquitinated by MDM2/Hdm2. Interacts with host PSMC3 and HTATIP2. Interacts with STAB1; this interaction may overcome SATB1-mediated repression of IL2 and IL2RA (interleukin) in T cells by binding to the same domain than HDAC1. Interacts (when acetylated) with human CDK13, thereby increasing HIV-1 mRNA splicing and promoting the production of the doubly spliced HIV-1 protein Nef. Interacts with host TBP; this interaction modulates the activity of transcriptional pre-initiation complex. Interacts with host RELA. Interacts with host PLSCR1; this interaction negatively regulates Tat transactivation activity by altering its subcellular distribution. In terms of processing, asymmetrical arginine methylation by host PRMT6 seems to diminish the transactivation capacity of Tat and affects the interaction with host CCNT1. Post-translationally, acetylation by EP300, CREBBP, GCN5L2/GCN5 and PCAF regulates the transactivation activity of Tat. EP300-mediated acetylation of Lys-50 promotes dissociation of Tat from the TAR RNA through the competitive binding to PCAF's bromodomain. In addition, the non-acetylated Tat's N-terminus can also interact with PCAF. PCAF-mediated acetylation of Lys-28 enhances Tat's binding to CCNT1. Lys-50 is deacetylated by SIRT1. Polyubiquitination by host MDM2 does not target Tat to degradation, but activates its transactivation function and fosters interaction with CCNT1 and TAR RNA. In terms of processing, phosphorylated by EIF2AK2 on serine and threonine residues adjacent to the basic region important for TAR RNA binding and function. Phosphorylation of Tat by EIF2AK2 is dependent on the prior activation of EIF2AK2 by dsRNA.

The protein resides in the host nucleus. It is found in the host nucleolus. Its subcellular location is the host cytoplasm. The protein localises to the secreted. Its function is as follows. Transcriptional activator that increases RNA Pol II processivity, thereby increasing the level of full-length viral transcripts. Recognizes a hairpin structure at the 5'-LTR of the nascent viral mRNAs referred to as the transactivation responsive RNA element (TAR) and recruits the cyclin T1-CDK9 complex (P-TEFb complex) that will in turn hyperphosphorylate the RNA polymerase II to allow efficient elongation. The CDK9 component of P-TEFb and other Tat-activated kinases hyperphosphorylate the C-terminus of RNA Pol II that becomes stabilized and much more processive. Other factors such as HTATSF1/Tat-SF1, SUPT5H/SPT5, and HTATIP2 are also important for Tat's function. Besides its effect on RNA Pol II processivity, Tat induces chromatin remodeling of proviral genes by recruiting the histone acetyltransferases (HATs) CREBBP, EP300 and PCAF to the chromatin. This also contributes to the increase in proviral transcription rate, especially when the provirus integrates in transcriptionally silent region of the host genome. To ensure maximal activation of the LTR, Tat mediates nuclear translocation of NF-kappa-B by interacting with host RELA. Through its interaction with host TBP, Tat may also modulate transcription initiation. Tat can reactivate a latently infected cell by penetrating in it and transactivating its LTR promoter. In the cytoplasm, Tat is thought to act as a translational activator of HIV-1 mRNAs. In terms of biological role, extracellular circulating Tat can be endocytosed by surrounding uninfected cells via the binding to several surface receptors such as CD26, CXCR4, heparan sulfate proteoglycans (HSPG) or LDLR. Neurons are rarely infected, but they internalize Tat via their LDLR. Through its interaction with nuclear HATs, Tat is potentially able to control the acetylation-dependent cellular gene expression. Modulates the expression of many cellular genes involved in cell survival, proliferation or in coding for cytokines or cytokine receptors. Tat plays a role in T-cell and neurons apoptosis. Tat induced neurotoxicity and apoptosis probably contribute to neuroAIDS. Circulating Tat also acts as a chemokine-like and/or growth factor-like molecule that binds to specific receptors on the surface of the cells, affecting many cellular pathways. In the vascular system, Tat binds to ITGAV/ITGB3 and ITGA5/ITGB1 integrins dimers at the surface of endothelial cells and competes with bFGF for heparin-binding sites, leading to an excess of soluble bFGF. This chain is Protein Tat, found in Homo sapiens (Human).